Here is a 291-residue protein sequence, read N- to C-terminus: Pantothenate synthetase (291 aa).

An ATP-binding site is contributed by 30–37; it reads MGALHAGH. The active-site Proton donor is the histidine 37. Glutamine 61 serves as a coordination point for (R)-pantoate. Glutamine 61 lines the beta-alanine pocket. 147–150 serves as a coordination point for ATP; that stretch reads GQKD. Glutamine 153 serves as a coordination point for (R)-pantoate. ATP is bound by residues valine 176 and 184–187; that span reads LSSR.

It belongs to the pantothenate synthetase family. As to quaternary structure, homodimer.

Its subcellular location is the cytoplasm. The catalysed reaction is (R)-pantoate + beta-alanine + ATP = (R)-pantothenate + AMP + diphosphate + H(+). The protein operates within cofactor biosynthesis; (R)-pantothenate biosynthesis; (R)-pantothenate from (R)-pantoate and beta-alanine: step 1/1. In terms of biological role, catalyzes the condensation of pantoate with beta-alanine in an ATP-dependent reaction via a pantoyl-adenylate intermediate. In Koribacter versatilis (strain Ellin345), this protein is Pantothenate synthetase.